We begin with the raw amino-acid sequence, 202 residues long: Imidazoleglycerol-phosphate dehydratase (202 aa).

This sequence belongs to the imidazoleglycerol-phosphate dehydratase family.

The protein localises to the cytoplasm. It catalyses the reaction D-erythro-1-(imidazol-4-yl)glycerol 3-phosphate = 3-(imidazol-4-yl)-2-oxopropyl phosphate + H2O. It participates in amino-acid biosynthesis; L-histidine biosynthesis; L-histidine from 5-phospho-alpha-D-ribose 1-diphosphate: step 6/9. The chain is Imidazoleglycerol-phosphate dehydratase from Sinorhizobium medicae (strain WSM419) (Ensifer medicae).